The sequence spans 212 residues: N-(5'-phosphoribosyl)anthranilate isomerase (212 aa).

Belongs to the TrpF family.

It carries out the reaction N-(5-phospho-beta-D-ribosyl)anthranilate = 1-(2-carboxyphenylamino)-1-deoxy-D-ribulose 5-phosphate. Its pathway is amino-acid biosynthesis; L-tryptophan biosynthesis; L-tryptophan from chorismate: step 3/5. The chain is N-(5'-phosphoribosyl)anthranilate isomerase from Roseiflexus castenholzii (strain DSM 13941 / HLO8).